The chain runs to 132 residues: Interleukin-5 (132 aa).

The signal sequence occupies residues 1–19; sequence MHLRLTLVALGAAYVCANA. Asparagine 74 and asparagine 88 each carry an N-linked (GlcNAc...) asparagine glycan.

It belongs to the IL-5 family. In terms of assembly, homodimer; disulfide-linked. Interacts with IL5RA. Interacts with CSF2RB.

Its subcellular location is the secreted. Functionally, homodimeric cytokine expressed predominantly by T-lymphocytes and NK cells that plays an important role in the survival, differentiation, and chemotaxis of eosinophils. Also acts on activated and resting B-cells to induce immunoglobulin production, growth, and differentiation. Mechanistically, exerts its biological effects through a receptor composed of IL5RA subunit and the cytokine receptor common subunit beta/CSF2RB. Binding to the receptor leads to activation of various kinases including LYN, SYK and JAK2 and thereby propagates signals through the RAS-MAPK and JAK-STAT5 pathways respectively. This Ovis aries (Sheep) protein is Interleukin-5 (IL5).